The following is a 323-amino-acid chain: 2-methylene-furan-3-one reductase (323 aa).

NADP(+) is bound by residues Lys59, 174–175 (GV), 197–200 (STKK), Tyr216, Ile254, 265–267 (FVL), and 312–313 (RA). Lys59 serves as a coordination point for substrate.

It belongs to the zinc-containing alcohol dehydrogenase family. Quinone oxidoreductase subfamily. In terms of assembly, monomer. In terms of processing, the N-terminus is blocked. Expressed in parenchyma tissues of red fruits. Not found in vascular tissues. Also detected in the achenes.

The enzyme catalyses 4-hydroxy-2,5-dimethyl-furan-3(2H)-one + NADP(+) = 4-hydroxy-5-methyl-2-methylenefuran-3(2H)-one + NADPH + H(+). In terms of biological role, enone oxidoreductase involved in the biosynthesis of 4-hydroxy-2,5-dimethyl-3(2H)-furanone (HDMF or furaneol), the key flavor compound in strawberries. Can use both NADH and NADPH as the electron donor. The sequence is that of 2-methylene-furan-3-one reductase (EO) from Fragaria ananassa (Strawberry).